The following is a 205-amino-acid chain: Small ribosomal subunit protein uS4 (205 aa).

The segment at 1 to 49 is disordered; it reads MSKRQSAKYKLDRRMGENIWGRPKSPVNRREYGPGQHGQRRKGKLSDFG. Residues 94 to 157 enclose the S4 RNA-binding domain; it reads SRLDAIVFRA…KQLTVVLESV (64 aa).

Belongs to the universal ribosomal protein uS4 family. As to quaternary structure, part of the 30S ribosomal subunit. Contacts protein S5. The interaction surface between S4 and S5 is involved in control of translational fidelity.

Its function is as follows. One of the primary rRNA binding proteins, it binds directly to 16S rRNA where it nucleates assembly of the body of the 30S subunit. Functionally, with S5 and S12 plays an important role in translational accuracy. The protein is Small ribosomal subunit protein uS4 of Chelativorans sp. (strain BNC1).